Consider the following 798-residue polypeptide: Integrin beta-1 (798 aa).

The first 20 residues, 1 to 20 (MNLQLIFWIGLISSVCYVFG), serve as a signal peptide directing secretion. Residues 21–728 (QADENRCLKA…ETPECPTGPD (708 aa)) lie on the Extracellular side of the membrane. The 51-residue stretch at 26 to 76 (RCLKANAKSCGECIQAGPNCGWCTNSTFLQEGMPTSARCDDLEALRKKGCH) folds into the PSI domain. Intrachain disulfides connect Cys-27–Cys-45, Cys-35–Cys-464, Cys-38–Cys-64, Cys-48–Cys-75, Cys-207–Cys-213, Cys-261–Cys-301, Cys-401–Cys-415, Cys-435–Cys-462, Cys-466–Cys-486, Cys-477–Cys-489, Cys-491–Cys-500, Cys-502–Cys-533, Cys-516–Cys-531, Cys-525–Cys-536, Cys-538–Cys-553, Cys-555–Cys-576, Cys-560–Cys-574, Cys-568–Cys-579, Cys-581–Cys-590, Cys-592–Cys-615, Cys-599–Cys-613, Cys-607–Cys-618, Cys-620–Cys-630, Cys-633–Cys-636, Cys-640–Cys-691, Cys-646–Cys-665, Cys-649–Cys-661, and Cys-699–Cys-723. Asn-50 is a glycosylation site (N-linked (GlcNAc...) asparagine). The span at 75 to 84 (CHPDDIENPR) shows a compositional bias: basic and acidic residues. Residues 75–107 (CHPDDIENPRGSKNIKKNKNVTNRSKGTAEKLQ) form a disordered region. Residues Asn-94 and Asn-97 are each glycosylated (N-linked (GlcNAc...) asparagine). The VWFA domain occupies 140–378 (DYPIDLYYLM…QLIIDAYNSL (239 aa)). 2 residues coordinate Mg(2+): Ser-152 and Ser-154. Ca(2+) contacts are provided by Ser-154, Asp-157, Asp-158, and Glu-189. The interval 207 to 213 (CTSEQNC) is CX3CL1-binding. Asn-212 carries an N-linked (GlcNAc...) asparagine glycan. Asn-244, Asp-246, Pro-248, and Glu-249 together coordinate Ca(2+). Mg(2+) is bound at residue Glu-249. N-linked (GlcNAc...) asparagine glycosylation occurs at Asn-269. Residues 295 to 314 (LPNDGHCHLENDVYTMSHYY) are CX3CL1-binding. A Ca(2+)-binding site is contributed by Ala-362. 3 N-linked (GlcNAc...) asparagine glycosylation sites follow: Asn-363, Asn-406, and Asn-417. The interaction with TMEM182 stretch occupies residues 383–465 (ILENSKLPEG…IILQFICECE (83 aa)). I-EGF domains follow at residues 466–501 (CQSE…RHCE), 502–554 (CSTD…KFCE), 555–591 (CDNF…SACD), and 592–631 (CSLD…PTCE). N-linked (GlcNAc...) asparagine glycosylation is present at Asn-481. Asn-520 carries an N-linked (GlcNAc...) asparagine glycan. Asn-584 carries N-linked (GlcNAc...) asparagine glycosylation. A glycan (N-linked (GlcNAc...) asparagine) is linked at Asn-669. Residues 729–749 (IIPIVAGVVAGIVLIGLALLL) form a helical membrane-spanning segment. At 750-798 (IWKLLMIIHDRREFAKFEKEKMNAKWDTGENPIYKSAVTTVVNPKYEGK) the chain is on the cytoplasmic side. The signal for sorting from recycling endosomes; interaction with ACAP1 stretch occupies residues 762–767 (EFAKFE). Thr-777 is modified (phosphothreonine). Tyr-783 is modified (phosphotyrosine). Phosphoserine is present on Ser-785. Residues 785–792 (SAVTTVVN) form an interaction with ITGB1BP1 region. Phosphothreonine is present on Thr-789. Lys-794 is modified (N6-acetyllysine; alternate). Lys-794 participates in a covalent cross-link: Glycyl lysine isopeptide (Lys-Gly) (interchain with G-Cter in SUMO1); alternate.

Belongs to the integrin beta chain family. In terms of assembly, interacts with seprase FAP (seprase); the interaction occurs at the cell surface of invadopodia membrane in a collagen-dependent manner. Heterodimer of an alpha and a beta subunit. Beta-1 associates with either alpha-1, alpha-2, alpha-3, alpha-4, alpha-5, alpha-6, alpha-7, alpha-8, alpha-9, alpha-10, alpha-11 or alpha-V. ITGA6:ITGB1 is found in a complex with CD9; interaction takes place in oocytes and is involved in sperm-egg fusion. Binds LGALS3BP and NMRK2, when associated with alpha-7, but not with alpha-5. Interacts with FLNA, FLNB, FLNC and RANBP9. Interacts with KRT1 in the presence of RACK1 and SRC. Interacts with JAML; integrin alpha-4/beta-1 may regulate leukocyte to endothelial cells adhesion by controlling JAML homodimerization. Interacts with RAB21. Interacts (via the cytoplasmic region) with RAB25 (via the hypervariable C-terminal region). Interacts with MYO10. Interacts with ITGB1BP1 (via C-terminal region); the interaction is a prerequisite for focal adhesion disassembly. Interacts with TLN1; the interaction is prevented by competitive binding of ITGB1BP1. Interacts with ACAP1; required for ITGB1 recycling. Interacts with ASAP3. Interacts with FERMT2; the interaction is inhibited in presence of ITGB1BP1. Interacts with DAB2. Interacts with FGR and HCK. Interacts with alpha-7A and alpha-7B in adult skeletal muscle. Interacts with alpha-7B in cardiomyocytes of adult heart. Interacts with EMP2; the interaction may be direct or indirect and ITGB1 has a heterodimer form. ITGA5:ITGB1 interacts with CCN3. ITGA4:ITGB1 is found in a ternary complex with CX3CR1 and CX3CL1. ITGA5:ITGB1 interacts with FBN1. ITGA5:ITGB1 interacts with IL1B. Interacts with MDK. ITGA4:ITGB1 interacts with MDK; this interaction mediates MDK-induced osteoblast cells migration through PXN phosphorylation. ITGA6:ITGB1 interacts with MDK; this interaction mediates MDK-induced neurite-outgrowth. ITGA5:ITGB1 interacts with ACE2. Interacts with TMEM182 and LAMB1. Interacts with tensin TNS3; TNS3 also interacts with PEAK1, thus acting as an adapter molecule to bridge the association of PEAK1 with ITGB1. Interacts with tensin TNS4; the interaction displaces tensin TNS3 from the ITGB1 cytoplasmic tail and promotes ITGB1 stability. Integrin ITGA9:ITGB1 interacts with SPP1/OPN (via N-terminus). Integrin ITGA9:ITGB1 interacts with TNC/TNFN3 (via the 3rd Fibronectin type-III domain). Integrins ITGA4:ITGB1 and ITGA9:ITGB1 interact with SVEP1 (via Sushi domain 21); thereby inhibit Ca(2+) intracellular signaling and as a result repress vasocontraction. ITGA4:ITGB1 and ITGA5:ITGB1 interacts with SELP. Interacts with CD248. ITGA5:ITGB1 interacts with IGFBP1. ITGA4:ITGB1 interacts with BCAM. Interacts with ADGRG6. As to expression, expressed in the spleen, thymus, alveolar macrophages, bone marrow, liver and kidney.

The protein localises to the cell membrane. It localises to the cell projection. Its subcellular location is the invadopodium membrane. The protein resides in the ruffle membrane. It is found in the recycling endosome. The protein localises to the melanosome. It localises to the lamellipodium. Its subcellular location is the ruffle. The protein resides in the cell junction. It is found in the focal adhesion. Integrins alpha-1/beta-1, alpha-2/beta-1, alpha-10/beta-1 and alpha-11/beta-1 are receptors for collagen. Integrins alpha-1/beta-1 and alpha-2/beta-2 recognize the proline-hydroxylated sequence G-F-P-G-E-R in collagen. Integrins alpha-2/beta-1, alpha-3/beta-1, alpha-4/beta-1, alpha-5/beta-1, alpha-8/beta-1, alpha-10/beta-1, alpha-11/beta-1 and alpha-V/beta-1 are receptors for fibronectin. Alpha-4/beta-1 recognizes one or more domains within the alternatively spliced CS-1 and CS-5 regions of fibronectin. Integrin alpha-5/beta-1 is a receptor for fibrinogen. Integrin alpha-1/beta-1, alpha-2/beta-1, alpha-6/beta-1 and alpha-7/beta-1 are receptors for lamimin. Integrin alpha-6/beta-1 (ITGA6:ITGB1) is present in oocytes and is involved in sperm-egg fusion. Integrin alpha-4/beta-1 is a receptor for VCAM1 and recognizes the sequence Q-I-D-S in VCAM1. Integrin alpha-9/beta-1 is a receptor for VCAM1, cytotactin and osteopontin. It recognizes the sequence A-E-I-D-G-I-E-L in cytotactin. Integrin alpha-3/beta-1 is a receptor for epiligrin, thrombospondin and CSPG4. Integrin alpha-3/beta-1 provides a docking site for FAP (seprase) at invadopodia plasma membranes in a collagen-dependent manner and hence may participate in the adhesion, formation of invadopodia and matrix degradation processes, promoting cell invasion. Alpha-3/beta-1 may mediate with LGALS3 the stimulation by CSPG4 of endothelial cells migration. Integrin alpha-V/beta-1 is a receptor for vitronectin. Beta-1 integrins recognize the sequence R-G-D in a wide array of ligands. When associated with alpha-7/beta-1 integrin, regulates cell adhesion and laminin matrix deposition. Involved in promoting endothelial cell motility and angiogenesis. Involved in osteoblast compaction through the fibronectin fibrillogenesis cell-mediated matrix assembly process and the formation of mineralized bone nodules. May be involved in up-regulation of the activity of kinases such as PKC via binding to KRT1. Together with KRT1 and RACK1, serves as a platform for SRC activation or inactivation. Plays a mechanistic adhesive role during telophase, required for the successful completion of cytokinesis. ITGA4:ITGB1 binds to fractalkine (CX3CL1) and may act as its coreceptor in CX3CR1-dependent fractalkine signaling. ITGA4:ITGB1 and ITGA5:ITGB1 bind to PLA2G2A via a site (site 2) which is distinct from the classical ligand-binding site (site 1) and this induces integrin conformational changes and enhanced ligand binding to site 1. ITGA5:ITGB1 acts as a receptor for fibrillin-1 (FBN1) and mediates R-G-D-dependent cell adhesion to FBN1. ITGA5:ITGB1 acts as a receptor for fibronectin FN1 and mediates R-G-D-dependent cell adhesion to FN1. ITGA5:ITGB1 is a receptor for IL1B and binding is essential for IL1B signaling. ITGA5:ITGB3 is a receptor for soluble CD40LG and is required for CD40/CD40LG signaling. Plays an important role in myoblast differentiation and fusion during skeletal myogenesis. ITGA9:ITGB1 may play a crucial role in SVEP1/polydom-mediated myoblast cell adhesion. Integrins ITGA9:ITGB1 and ITGA4:ITGB1 repress PRKCA-mediated L-type voltage-gated channel Ca(2+) influx and ROCK-mediated calcium sensitivity in vascular smooth muscle cells via their interaction with SVEP1, thereby inhibit vasocontraction. In Sus scrofa (Pig), this protein is Integrin beta-1 (ITGB1).